A 1032-amino-acid chain; its full sequence is GPI ethanolamine phosphate transferase 1 (1032 aa).

Residues 1 to 6 (MARLGR) are Cytoplasmic-facing. Residues 7 to 27 (FGFLALAVVFHLIYAYSIFDI) traverse the membrane as a helical segment. Residues 28 to 468 (YFVSPIVSGM…LQTYDWLFLR (441 aa)) are Lumenal-facing. Asn-150 and Asn-435 each carry an N-linked (GlcNAc...) asparagine glycan. Residues 469-489 (TIITFGYLGWIAYALTTVIDL) traverse the membrane as a helical segment. The Cytoplasmic portion of the chain corresponds to 490–500 (HVLHRTSDSKR). The helical transmembrane segment at 501–521 (TVGSTIFFTSILAALFSVLLY) threads the bilayer. Topologically, residues 522-523 (QK) are lumenal. A helical transmembrane segment spans residues 524–544 (SSWQYYVYGAFPIFFWEEVFA). Residues 545–564 (RRKALIAGREILLGHVRSFG) lie on the Cytoplasmic side of the membrane. A helical transmembrane segment spans residues 565-585 (GYIASGFQLVAFVAVLEALLM). Residues 586–596 (RHQVQSYFHRE) lie on the Lumenal side of the membrane. The chain crosses the membrane as a helical span at residues 597-617 (IYTVCFVLGSFWPILYGVDFV). The Cytoplasmic segment spans residues 618-622 (RQNTV). The chain crosses the membrane as a helical span at residues 623-643 (LSATWAVGCSLMSTFTLLPVI). Topologically, residues 644–647 (KVEN) are lumenal. Residues 648-668 (INTITYGALLMFFTGLFYLLF) traverse the membrane as a helical segment. The Cytoplasmic portion of the chain corresponds to 669-688 (EDTILKHSKSSGHAPGAISS). Residues 689-709 (LGSRVIMGMQVGMVLLALIVT) traverse the membrane as a helical segment. Residues 710-722 (RSSVSSLQAKQGL) are Lumenal-facing. Residues 723–743 (PFGNQVVGWFVLVASLVLPFF) form a helical membrane-spanning segment. At 744-766 (HRLYPNSHYLHRLMVLFLTFSPT) the chain is on the cytoplasmic side. Residues 767-787 (FIILTISYEGLFYFVFCMTLV) form a helical membrane-spanning segment. Over 788–841 (TWVRLEHAIYVYTARSSAHYGGNNTVPKKPGLNATAVIDGQEYRYRRLGLADTR) the chain is Lumenal. N-linked (GlcNAc...) asparagine glycosylation is found at Asn-810 and Asn-820. The chain crosses the membrane as a helical span at residues 842–862 (VALFFFFLLQSAFFSTGNIAS). Residues 863–884 (VSSFSLESVFRLIPVFSPFSQS) lie on the Cytoplasmic side of the membrane. A helical membrane pass occupies residues 885 to 905 (ALLILKLLIPFAIISANLGIL). Residues 906-914 (NRRLEVAPS) lie on the Lumenal side of the membrane. A helical transmembrane segment spans residues 915 to 935 (ALFMVVMSISDVMTLNFFYMV). Residues 936-951 (RDEGSWLDIGTTISHF) are Cytoplasmic-facing. The helical transmembrane segment at 952-972 (LIASFLCTFVAGLEFLSEVFI) threads the bilayer. Residues 973–1032 (SGVDFGPTTKAIGASITKTVGGTAGSDVVDSQSGPEDAANSKKAEGLEGSETIRQNGGSV) are Lumenal-facing. The tract at residues 994 to 1032 (GTAGSDVVDSQSGPEDAANSKKAEGLEGSETIRQNGGSV) is disordered.

It belongs to the PIGG/PIGN/PIGO family. PIGN subfamily.

It is found in the endoplasmic reticulum membrane. It participates in glycolipid biosynthesis; glycosylphosphatidylinositol-anchor biosynthesis. Ethanolamine phosphate transferase involved in glycosylphosphatidylinositol-anchor biosynthesis. Transfers ethanolamine phosphate to the first alpha-1,4-linked mannose of the glycosylphosphatidylinositol precursor of GPI-anchor. This Aspergillus fumigatus (strain ATCC MYA-4609 / CBS 101355 / FGSC A1100 / Af293) (Neosartorya fumigata) protein is GPI ethanolamine phosphate transferase 1 (mcd4).